The following is a 149-amino-acid chain: D-aminoacyl-tRNA deacylase (149 aa).

Positions 137–138 match the Gly-cisPro motif, important for rejection of L-amino acids motif; that stretch reads GP.

The protein belongs to the DTD family. Homodimer.

The protein localises to the cytoplasm. It carries out the reaction glycyl-tRNA(Ala) + H2O = tRNA(Ala) + glycine + H(+). The catalysed reaction is a D-aminoacyl-tRNA + H2O = a tRNA + a D-alpha-amino acid + H(+). An aminoacyl-tRNA editing enzyme that deacylates mischarged D-aminoacyl-tRNAs. Also deacylates mischarged glycyl-tRNA(Ala), protecting cells against glycine mischarging by AlaRS. Acts via tRNA-based rather than protein-based catalysis; rejects L-amino acids rather than detecting D-amino acids in the active site. By recycling D-aminoacyl-tRNA to D-amino acids and free tRNA molecules, this enzyme counteracts the toxicity associated with the formation of D-aminoacyl-tRNA entities in vivo and helps enforce protein L-homochirality. The protein is D-aminoacyl-tRNA deacylase of Thermotoga petrophila (strain ATCC BAA-488 / DSM 13995 / JCM 10881 / RKU-1).